A 640-amino-acid chain; its full sequence is Tyrosine--tRNA ligase, mitochondrial (640 aa).

Tyr100 provides a ligand contact to L-tyrosine. Asp104 lines the ATP pocket. The short motif at 105-114 is the 'HIGH' region element; that stretch reads PTAPSLHIGH. Positions 144, 248, 252, 255, and 274 each coordinate L-tyrosine. The short motif at 322–326 is the 'KMSKS' region element; sequence KFGKS. Lys325 contributes to the ATP binding site.

Belongs to the class-I aminoacyl-tRNA synthetase family.

Its subcellular location is the mitochondrion matrix. The enzyme catalyses tRNA(Tyr) + L-tyrosine + ATP = L-tyrosyl-tRNA(Tyr) + AMP + diphosphate + H(+). Its function is as follows. Has both an aminoacyl-tRNA synthetase activity and is involved in the splicing of group I introns. This Podospora anserina (Pleurage anserina) protein is Tyrosine--tRNA ligase, mitochondrial (YTS1).